The following is a 266-amino-acid chain: Undecaprenyl-diphosphatase (266 aa).

8 consecutive transmembrane segments (helical) span residues 1–21 (MDTFQVIILALIQGLTEFLPI), 39–59 (QGLSFDVAVNTGSLLAVVMYF), 87–107 (WWIILATIPAVIIGFSAKDFI), 111–131 (FRSIEVIAATTIIFGLLLWWA), 144–164 (VGWKKALVIGIAQAMALIPGT), 183–203 (AAARFSFLMSVPVSLGAAILV), 218–238 (ALGLGILVSFIAAYICIHYFL), and 246–266 (MTPFVIYRLALGAVLCWIIFL).

The protein belongs to the UppP family.

The protein resides in the cell inner membrane. It catalyses the reaction di-trans,octa-cis-undecaprenyl diphosphate + H2O = di-trans,octa-cis-undecaprenyl phosphate + phosphate + H(+). In terms of biological role, catalyzes the dephosphorylation of undecaprenyl diphosphate (UPP). Confers resistance to bacitracin. This chain is Undecaprenyl-diphosphatase, found in Shewanella pealeana (strain ATCC 700345 / ANG-SQ1).